Consider the following 205-residue polypeptide: Putative 3-methyladenine DNA glycosylase (205 aa).

It belongs to the DNA glycosylase MPG family.

The sequence is that of Putative 3-methyladenine DNA glycosylase from Bacillus cereus (strain ATCC 14579 / DSM 31 / CCUG 7414 / JCM 2152 / NBRC 15305 / NCIMB 9373 / NCTC 2599 / NRRL B-3711).